The following is a 288-amino-acid chain: Pirin-like protein CC_3178 (288 aa).

This sequence belongs to the pirin family.

In Caulobacter vibrioides (strain ATCC 19089 / CIP 103742 / CB 15) (Caulobacter crescentus), this protein is Pirin-like protein CC_3178.